The chain runs to 2637 residues: MADGADYTQRNIHSLDSSLDLDRFCASLHQVVASNQILRTRIVDCPLGLVQVIVKSEAFIDCLSRPCNADVEQYLRQDEMSPMHLGMPLARFAIVGRKLVTTIHHAIADSHSLLYLYEDAWKIYQGESPPPRAPFREFVDYCKSIDSKSAAAFWKSQFSESAPGVFPTVPSGHLIKASQTAAHTISLAKKPPLPLLPAYIEAAWAMTAADYTGSENVVFGYVMSGRTAIGGAETTLGPTISTVPMQVQLNASASIEQLLKSRTQFRRSLLASPFLQYGLANIRHTVSDEAHVASGFQTLLDILSVDETQANAPGLTLERTIHTYVHGLTLMCKIAGEDILVRADFDSIVLPDAQVQRILRQMEHRLKALIRSPPSTELRNLSPLNLSDTIEILDWNSDVPDAVNQCVHDIFTSQASRRPDAAAVHAWDGQATYHELDVMSDNLAHELLLRKISPEVPIAFTLERSLSAVVAVLGIMKAGGACLPIELSFPRARKDAIVRVVGARLIVTSSTHEAVEGCESIILDLHRVAHRGVDIRRRINRDPARAAYILFTSGSTGEPKGVVLEHRSLATSYTAICNRVGWSSGTRILQFSSPAWDAFALEVLGPLMVGGCICIPSNISRESALGEYINSARVDSVLQTPTALRNLTPDDMLPSLKSLLVGGEPIPENAYKTWGSKVRLYNIWAPCETSTISTIADLSPLSVYPTSIGTPVGSAVWIVDRDDPSKLLPIGAVGEMLVEGPGVARGYHNNPTQTAPSFISPPPFIPMRPNASSPKVYRTGDLARYNPDGSIAFVGRRDNQIKLRGQRFEMEDVEQVLGRHGCTCAVAVVNFKLPRQEREDLVAFVTLSAVPGYHPSPQSTDDELPAVPLNEDIRNQLQTLHDFTRGQLPPYMVPTAWVVVRHLPKLTSTKIDRVKLRQWLHEVDLSSARVIMRQFGDGRRTHGLTPPANPPERALQLAWSSVLGVEEGHIGRESSFLSLGGDSITAMQVASRCHKQGFSIRSTALLRAGTLAEAASEIKEPTDASAPSPSPISRDLPLQKSNHDRGLQGHLHPTSLCVPRDNVEAIYPCTALQEGLLLARMKHNGDEREYNNRFAFRLTTRCGIKVDITRVSNAWKALCAAHPILRTIFVPGLSQNGAFQQIVLKDSAPSISIHRVQANCSDTTELFRHQERLPFAHTQPPHRLSLYEGVGKAVYAILEISHAIFDARTLRIILANIATGYTSCRAIKKGRSFSDYVAREQEREEVGRQYWKTYLAGAQPCILPRDSAMEETSSSIRGLEVPCQNAPGLLAFCRSQGVTIANFIQAAWGVVLQLYTGLSSVYFGCSRSDQDRLDGGEDILGPLITMMVCKFSFEDRSVSGVHLLQIAREDAARGMEQPGCSLSRLHDDLALSNSPLFDTIMTVAHAWPTDLAPGEGDLVIEHTDSEGTTEYSIIVTVGYSKDSLNIHLAYQRARLSDSLVECIARTFAQVITRIIASPEESVLQALQPERPESCLTLSRADMSLLQRWNTPAPLAFKECFPQRAREVAHQRPLAPAVCSWDQNLDYCQLDLLSDYLAHKIIAQYGIGAEAVVPFACEKAASAIVILLAISKTGAAFLPLDITHPPERLATVVADSGASLIIVNTPELRNKMAAWTRQSIFLARLDDIVEETSVEQTLKIRSDLKSVTIEPSNAAYVVYTSGSTGKPKGVLVEHGNLAVGAEEHARRIGITARSRVLQLASFAFDLAIGDVVYALCSGACLCVPSESDRNGNIAGVINRLHANFLFTTPTQLSVLTPEEVPTLRTVSVGGEPVGRQIIETWTPHVRLVIPYGPVETTIIVSCRDVTSGDQDGRDIGHPSSCRFWVVDPDNRDSLVPIGTPGELVIEGPVVARGYLHTSDATGSAFIDPPAWSNAQEFASLNLASRRFYKTGDLVTQVGEKSFLIEGRKDTRVKLHGQRVELGEIEYHLSHRVEPGWHWAVDIIQPRGGKDPCLAAFFVTDKSNIMETPTPASGHELLEPLAEHASAAKETLKHVLPAYMVPEYFIRIRALPMLSSLKTDRKALRTMAAGLSRAELLAYRVRESVSNIGHAHSNPAKTQKEVTDDQAFMQQAWADVLGISSDEIGCGDNFFDIGGNSIRAIHLIARLRKSGHKLSVEEVFRARTLAYMVSKTSVSNAQSGDQPTSTPPAALDTESIPHLMHLAEKFPWLQRDNIESVAPATDAQAWMLDVSERAGRGFDNGLTLIPLPGHALSRPKLQRACQEVLRQHPILRTVFVCCESQVLQVALRKPPIEQVHTDKGPPKLSSSSILNRLPTFYLTSDSGSTSCRSLELRIHHALYDAISLGHLLDDLGAAYKGRDLVTRPTQYHEWISHIKAKETTDTYIFWRELLRGSMPRSLVSRRSNWSAPGNPTDSKICFKTRVDAIPVSYGTDATVFNAAWSLVLSQVLEKQDVVFGYISANRSCALPGVDQIVGPCINILPVHARCNGDITAASLVAELQRQSTDSIPHQHVGLLSILKNSTDWPKGTLNSLVAFQNHEAIDDIVKLGDVDCALSANGRVGNSAEVCLGIEPQPDGQVGITLQYSSVSMPHEKVLWMGAYLDAALHAFPTHWTKTIDQLRHHIDANCNFPRPPENGELKGGAIPHNNAGTGRFIIEAAS.

The interval 1–376 (MADGADYTQR…KALIRSPPST (376 aa)) is condensation 1. The segment at 413–803 (SQASRRPDAA…VGRRDNQIKL (391 aa)) is adenylation 1. The region spanning 946–1022 (PPANPPERAL…EAASEIKEPT (77 aa)) is the Carrier 1 domain. S983 is subject to O-(pantetheine 4'-phosphoryl)serine. Residues 1016–1045 (SEIKEPTDASAPSPSPISRDLPLQKSNHDR) form a disordered region. Positions 1063 to 1506 (VEAIYPCTAL…LSRADMSLLQ (444 aa)) are condensation 2. An adenylation 2 region spans residues 1524 to 1933 (AREVAHQRPL…EGRKDTRVKL (410 aa)). A Carrier 2 domain is found at 2078–2154 (KEVTDDQAFM…YMVSKTSVSN (77 aa)). S2115 carries the O-(pantetheine 4'-phosphoryl)serine modification. The interval 2193-2582 (ESVAPATDAQ…LWMGAYLDAA (390 aa)) is condensation 3.

Belongs to the NRP synthetase family.

Its pathway is secondary metabolite biosynthesis. In terms of biological role, nonribisomal peptide synthetase; part of the gene cluster that mediates the biosynthesis of valactamides. The first step of the pathway is performed by the highly reducing polyketide synthase valA that produces the polyketide part of the final products. An acetyl starter unit is incorporated by the ketosynthase domain of valA, and subsequently 6 malonyl-CoA-derived ketide units are incorporated and fully reduced to their respective alkane forms by the action of the ketoreductase, dehydratase, and enoylreductase domains (except for the penultimate unit, which is reduced only to the alkene). The final five ketide units are each proposed to be alpha-methylated by the methyltransferase domain before ketone reduction by the ketoreductase domain. The C1 domain of the nonribisomal peptide synthetase valB then catalyzes amide bond formation between the heptaketide chain and L-valine (L-Val) attached to the T1 domain. The C2 domain incorporating L-isoleucine (L-Ile) then carries out chain elongation, which is followed by macrolactonization by the Ct domain to release the final product. The sequence is that of Nonribisomal peptide synthetase valB from Aspergillus terreus.